A 916-amino-acid polypeptide reads, in one-letter code: Rab3 GTPase-activating protein catalytic subunit (916 aa).

The segment at N530–V574 is disordered. A phosphoserine mark is found at S543 and S544. The span at E545 to D562 shows a compositional bias: acidic residues.

This sequence belongs to the Rab3-GAP catalytic subunit family. In terms of assembly, the Rab3 GTPase-activating complex is a heterodimer composed of Rab3GAP1 and Rab3-GAP.

Its subcellular location is the cytoplasm. In terms of biological role, catalytic subunit of the Rab3 GTPase-activating (Rab3GAP) complex composed of Rab3-GAP and Rab3GAP1, which has both GTPase-activating protein (GAP) activity towards Rab3, and guanine nucleotide exchange factor (GEF) activity towards Rab18. As part of the Rab3GAP complex, required for the rapid induction and sustained expression of synaptic homeostasis at the neuromuscular junction (NMJ). Also participates in the regulation of autophagy in tissues such as larval fat cells and adult muscles. The Rab3GAP complex, acts as a GAP for Rab3 by converting active Rab3-GTP to the inactive form Rab3-GDP. At the neuromuscular junction (NMJ), forms a presynaptic signaling mechanism with Rab3 that regulates progression of synaptic homeostasis at a late stage of vesicle release. Within this mechanism Rab3-GTP acts, directly or indirectly, to inhibit the progression of synaptic homeostasis, and Rab3-GAP functions to inactivate this action of Rab3-GTP. The Rab3GAP complex, acts as a GEF for Rab18 by promoting the conversion of inactive Rab18-GDP to the active form Rab18-GTP. Regulates autophagy as part of a Rab3GAP-Rab18 module. Once Rab18 is activated by the GEF Rab3GAP complex, the Rab3GAP-Rab18 module localizes to autophagosomes, and regulates autolysosome formation and maturation together with the Rab18 interacting effector, the PI3K/Vps34 Complex I. The sequence is that of Rab3 GTPase-activating protein catalytic subunit from Drosophila melanogaster (Fruit fly).